We begin with the raw amino-acid sequence, 195 residues long: L-rhamnose-binding lectin CSL2 (195 aa).

2 consecutive SUEL-type lectin domains span residues T1–L97 and T104–G195.

In terms of biological role, L-rhamnose binding lectin. Has hemagglutinating activity towards rabbit erythrocytes and human type B erythrocytes. Hemagglutinating activity is inhibited by smooth-type lipopolysaccharide (LPS) from S.flexneri 1A and E.coli K12, but not by rough-type LPS from S.flexneri, E.coli K12 and E.coli EH100. Agglutinates E.coli K12 and B.subtilis. The sequence is that of L-rhamnose-binding lectin CSL2 from Oncorhynchus keta (Chum salmon).